The following is a 328-amino-acid chain: L-arabinose transport system permease protein AraH (328 aa).

10 helical membrane-spanning segments follow: residues 29–49, 53–73, 79–99, 104–124, 129–149, 171–191, 220–240, 249–269, 276–296, and 297–317; these read VVFAVLFIACAIFVPNFATFI, GLGLAISMSGMVACGMLFCLA, LSVASVIACAGVTTAVVINLT, IGVAAGLLLGVLCGLVNGFVI, INALITTLATMQIVRGLAYII, FGLPAPIWLTVACLIIFGLLL, TKIIIFVLSGLVSAIAGIILA, MTSIGYELIVISACVLGGVSL, ISYVVAGILILGTVENAMNLL, and NISPFAQYVVRGLILLAAVIF.

The protein belongs to the binding-protein-dependent transport system permease family. AraH/RbsC subfamily.

The protein localises to the cell inner membrane. Its function is as follows. Part of the binding-protein-dependent transport system for L-arabinose. Probably responsible for the translocation of the substrate across the membrane. This Escherichia coli (strain K12) protein is L-arabinose transport system permease protein AraH (araH).